The chain runs to 233 residues: Glyceraldehyde-3-phosphate dehydrogenase A, chloroplastic (233 aa).

Residues 49–51 (SCT), Thr-80, Arg-95, 108–109 (TG), and Arg-131 each bind D-glyceraldehyde 3-phosphate. The active-site Nucleophile is the Cys-50. Asn-213 lines the NADP(+) pocket.

It belongs to the glyceraldehyde-3-phosphate dehydrogenase family. As to quaternary structure, tetramer of either four A chains (GAPDH 2) or two A and two B chains (GAPDH 1).

It localises to the plastid. It is found in the chloroplast. The catalysed reaction is D-glyceraldehyde 3-phosphate + phosphate + NADP(+) = (2R)-3-phospho-glyceroyl phosphate + NADPH + H(+). The protein operates within carbohydrate biosynthesis; Calvin cycle. In Sinapis alba (White mustard), this protein is Glyceraldehyde-3-phosphate dehydrogenase A, chloroplastic (GAPA).